A 133-amino-acid chain; its full sequence is Large ribosomal subunit protein bL17 (133 aa).

Belongs to the bacterial ribosomal protein bL17 family. In terms of assembly, part of the 50S ribosomal subunit. Contacts protein L32.

The protein is Large ribosomal subunit protein bL17 of Alteromonas mediterranea (strain DSM 17117 / CIP 110805 / LMG 28347 / Deep ecotype).